The chain runs to 230 residues: Protein STK_02290 (230 aa).

Residues 15–213 enclose the AMMECR1 domain; it reads NLGKVLIKIA…EEKPKSEKIL (199 aa).

The chain is Protein STK_02290 from Sulfurisphaera tokodaii (strain DSM 16993 / JCM 10545 / NBRC 100140 / 7) (Sulfolobus tokodaii).